A 233-amino-acid polypeptide reads, in one-letter code: Esterase FUS5 (233 aa).

Residues Ser-105, Asp-159, and His-187 each act as charge relay system in the active site.

It belongs to the LovG family.

Functionally, esterase; part of the gene cluster that mediates the biosynthesis of the mycotoxin fusarin C. Within the cluster, FUS1, FUS2, FUS8 and FUS9 are sufficient for fusarin production. The other FUS cluster members are not essential for fusarin C biosynthesis. The chain is Esterase FUS5 from Gibberella moniliformis (strain M3125 / FGSC 7600) (Maize ear and stalk rot fungus).